Reading from the N-terminus, the 431-residue chain is Histidinol dehydrogenase (431 aa).

3 residues coordinate NAD(+): Y127, Q189, and N212. The substrate site is built by S237, Q259, and H262. Positions 259 and 262 each coordinate Zn(2+). Catalysis depends on proton acceptor residues E326 and H327. Substrate-binding residues include H327, D360, E414, and H419. Position 360 (D360) interacts with Zn(2+). Zn(2+) is bound at residue H419.

It belongs to the histidinol dehydrogenase family. Zn(2+) is required as a cofactor.

The catalysed reaction is L-histidinol + 2 NAD(+) + H2O = L-histidine + 2 NADH + 3 H(+). Its pathway is amino-acid biosynthesis; L-histidine biosynthesis; L-histidine from 5-phospho-alpha-D-ribose 1-diphosphate: step 9/9. Its function is as follows. Catalyzes the sequential NAD-dependent oxidations of L-histidinol to L-histidinaldehyde and then to L-histidine. The sequence is that of Histidinol dehydrogenase from Xanthomonas campestris pv. campestris (strain ATCC 33913 / DSM 3586 / NCPPB 528 / LMG 568 / P 25).